Reading from the N-terminus, the 396-residue chain is MSVRLVLTKGREKSLLRRHPWVFSGAVARMEGKASLGETIDIVDHQGKWLARGAYSPASQIRARVWTFDKDETIDIAFFTRRLQQAQQWRDWLAKRDGLDSYRLIAGESDGMPGVTIDRFANFLVLQLLSAGAEYQRAALISALQTLYPECAIYDRSDVAVRKKEGMELTQGTVTGELPPALLPIEEHGMKLFVDIQGGHKTGYYLDQRDSRLATRQYVKDKRVLNCFSYTGGFAVSALMGGCSQVVSVDTSQEALDVAKQNVELNKLDLSKAEFVRDDVFKLLRKYRDQGEKFDVIVMDPPKFVENKSQLMGACRGYKDINMLAIQLLNPGGILLTFSCSGLMTTDLFQKLVADAAVDAGRDVQFIEQFRQAADHPVIATYPEGLYLKGFACRVM.

One can recognise a PUA domain in the interval 2-81; it reads SVRLVLTKGR…ETIDIAFFTR (80 aa).

The protein belongs to the methyltransferase superfamily. RlmI family.

The protein resides in the cytoplasm. It carries out the reaction cytidine(1962) in 23S rRNA + S-adenosyl-L-methionine = 5-methylcytidine(1962) in 23S rRNA + S-adenosyl-L-homocysteine + H(+). Its function is as follows. Specifically methylates the cytosine at position 1962 (m5C1962) of 23S rRNA. This chain is Ribosomal RNA large subunit methyltransferase I, found in Enterobacter sp. (strain 638).